A 187-amino-acid chain; its full sequence is Large ribosomal subunit protein eL18A (187 aa).

Residues Ser-16 and Ser-64 each carry the phosphoserine modification. Phosphothreonine occurs at positions 87, 89, and 134. Residue Ser-136 is modified to Phosphoserine. Thr-138 bears the Phosphothreonine mark.

Belongs to the eukaryotic ribosomal protein eL18 family. As to quaternary structure, component of the large ribosomal subunit (LSU). Mature yeast ribosomes consist of a small (40S) and a large (60S) subunit. The 40S small subunit contains 1 molecule of ribosomal RNA (18S rRNA) and at least 33 different proteins. The large 60S subunit contains 3 rRNA molecules (25S, 5.8S and 5S rRNA) and at least 46 different proteins. eL18 interacts with NAP1.

The protein localises to the cytoplasm. Component of the ribosome, a large ribonucleoprotein complex responsible for the synthesis of proteins in the cell. The small ribosomal subunit (SSU) binds messenger RNAs (mRNAs) and translates the encoded message by selecting cognate aminoacyl-transfer RNA (tRNA) molecules. The large subunit (LSU) contains the ribosomal catalytic site termed the peptidyl transferase center (PTC), which catalyzes the formation of peptide bonds, thereby polymerizing the amino acids delivered by tRNAs into a polypeptide chain. The nascent polypeptides leave the ribosome through a tunnel in the LSU and interact with protein factors that function in enzymatic processing, targeting, and the membrane insertion of nascent chains at the exit of the ribosomal tunnel. The protein is Large ribosomal subunit protein eL18A (rpl1801) of Schizosaccharomyces pombe (strain 972 / ATCC 24843) (Fission yeast).